A 505-amino-acid chain; its full sequence is Probable bifunctional methylthioribulose-1-phosphate dehydratase/enolase-phosphatase E1 (505 aa).

The segment at 1–237 is methylthioribulose-1-phosphate dehydratase; that stretch reads MGLDKDGISN…ALKLHQLGLD (237 aa). Cys-109 lines the substrate pocket. Zn(2+)-binding residues include His-127 and His-129. The Proton donor/acceptor; for methylthioribulose-1-phosphate dehydratase activity role is filled by Glu-152. Zn(2+) is bound at residue His-202. The tract at residues 266–505 is enolase-phosphatase E1; that stretch reads FVLDIEGTTT…FRTAKSLLEL (240 aa). Mg(2+)-binding residues include Asp-269 and Glu-271. Residues 404–405 and Lys-438 contribute to the substrate site; that span reads SS. Asp-464 lines the Mg(2+) pocket.

The protein in the N-terminal section; belongs to the aldolase class II family. MtnB subfamily. This sequence in the C-terminal section; belongs to the HAD-like hydrolase superfamily. MasA/MtnC family. Zn(2+) serves as cofactor. Requires Mg(2+) as cofactor.

The catalysed reaction is 5-(methylsulfanyl)-D-ribulose 1-phosphate = 5-methylsulfanyl-2,3-dioxopentyl phosphate + H2O. It carries out the reaction 5-methylsulfanyl-2,3-dioxopentyl phosphate + H2O = 1,2-dihydroxy-5-(methylsulfanyl)pent-1-en-3-one + phosphate. It participates in amino-acid biosynthesis; L-methionine biosynthesis via salvage pathway; L-methionine from S-methyl-5-thio-alpha-D-ribose 1-phosphate: step 2/6. The protein operates within amino-acid biosynthesis; L-methionine biosynthesis via salvage pathway; L-methionine from S-methyl-5-thio-alpha-D-ribose 1-phosphate: step 3/6. It functions in the pathway amino-acid biosynthesis; L-methionine biosynthesis via salvage pathway; L-methionine from S-methyl-5-thio-alpha-D-ribose 1-phosphate: step 4/6. The polypeptide is Probable bifunctional methylthioribulose-1-phosphate dehydratase/enolase-phosphatase E1 (Physcomitrium patens (Spreading-leaved earth moss)).